A 159-amino-acid polypeptide reads, in one-letter code: Probable minor fimbrial protein (159 aa).

The propeptide at methionine 1–glycine 6 is leader sequence. N-methylphenylalanine is present on phenylalanine 7. The helical transmembrane segment at phenylalanine 7–leucine 27 threads the bilayer. Disulfide bonds link cysteine 56-cysteine 71 and cysteine 140-cysteine 153.

Belongs to the N-Me-Phe pilin family. As to quaternary structure, the pili are polar flexible filaments of about 5.4 nanometers diameter and 2.5 micrometers average length; they consist of only a single polypeptide chain arranged in a helical configuration of five subunits per turn in the assembled pilus.

It is found in the fimbrium. The protein localises to the membrane. The polypeptide is Probable minor fimbrial protein (fimZ) (Dichelobacter nodosus (Bacteroides nodosus)).